Reading from the N-terminus, the 189-residue chain is MVKVIASSVRKGNVLDVDGKLYVVLTAQNFHPGKGTPVTQVDMRRIVDGVKVSERWRTTEQVERAFVEDVNFQYLYEDGEGFHFMNPANYDQVVVSQETMGDQKAYLQEGMTCILSIHEGIPLALELPRHVTLEIVETEPVVKGQTASSSYKPAMLSNGIRTSVPPHIDAGTRVVIATEDNSYVERAKD.

This sequence belongs to the elongation factor P family.

It localises to the cytoplasm. The protein operates within protein biosynthesis; polypeptide chain elongation. Functionally, involved in peptide bond synthesis. Stimulates efficient translation and peptide-bond synthesis on native or reconstituted 70S ribosomes in vitro. Probably functions indirectly by altering the affinity of the ribosome for aminoacyl-tRNA, thus increasing their reactivity as acceptors for peptidyl transferase. The sequence is that of Elongation factor P from Rhizobium etli (strain CIAT 652).